We begin with the raw amino-acid sequence, 340 residues long: Dihydroorotate dehydrogenase (quinone) (340 aa).

Residues 62 to 66 (AGMDK) and threonine 86 each bind FMN. Lysine 66 provides a ligand contact to substrate. 111–115 (NRMGF) lines the substrate pocket. The FMN site is built by asparagine 139 and asparagine 172. Substrate is bound at residue asparagine 172. The active-site Nucleophile is serine 175. Residue asparagine 177 participates in substrate binding. FMN is bound by residues lysine 217 and threonine 245. 246 to 247 (NT) contributes to the substrate binding site. FMN contacts are provided by residues glycine 268, glycine 297, and 318-319 (YS).

Belongs to the dihydroorotate dehydrogenase family. Type 2 subfamily. In terms of assembly, monomer. The cofactor is FMN.

Its subcellular location is the cell membrane. The catalysed reaction is (S)-dihydroorotate + a quinone = orotate + a quinol. It participates in pyrimidine metabolism; UMP biosynthesis via de novo pathway; orotate from (S)-dihydroorotate (quinone route): step 1/1. Its function is as follows. Catalyzes the conversion of dihydroorotate to orotate with quinone as electron acceptor. This Shewanella woodyi (strain ATCC 51908 / MS32) protein is Dihydroorotate dehydrogenase (quinone).